The chain runs to 270 residues: NAD kinase (270 aa).

Aspartate 63 acts as the Proton acceptor in catalysis. NAD(+) contacts are provided by residues 63 to 64 (DG), 131 to 132 (NE), lysine 142, arginine 159, aspartate 161, 172 to 177 (TAYAMS), alanine 196, and glutamine 230.

The protein belongs to the NAD kinase family. The cofactor is a divalent metal cation.

The protein resides in the cytoplasm. The enzyme catalyses NAD(+) + ATP = ADP + NADP(+) + H(+). Its function is as follows. Involved in the regulation of the intracellular balance of NAD and NADP, and is a key enzyme in the biosynthesis of NADP. Catalyzes specifically the phosphorylation on 2'-hydroxyl of the adenosine moiety of NAD to yield NADP. The protein is NAD kinase of Methanoculleus marisnigri (strain ATCC 35101 / DSM 1498 / JR1).